We begin with the raw amino-acid sequence, 244 residues long: Phosphoadenosine 5'-phosphosulfate reductase (244 aa).

Cys239 acts as the Nucleophile; cysteine thiosulfonate intermediate in catalysis.

This sequence belongs to the PAPS reductase family. CysH subfamily.

It localises to the cytoplasm. It carries out the reaction [thioredoxin]-disulfide + sulfite + adenosine 3',5'-bisphosphate + 2 H(+) = [thioredoxin]-dithiol + 3'-phosphoadenylyl sulfate. The protein operates within sulfur metabolism; hydrogen sulfide biosynthesis; sulfite from sulfate: step 3/3. In terms of biological role, catalyzes the formation of sulfite from phosphoadenosine 5'-phosphosulfate (PAPS) using thioredoxin as an electron donor. The chain is Phosphoadenosine 5'-phosphosulfate reductase from Escherichia coli O6:K15:H31 (strain 536 / UPEC).